The following is a 308-amino-acid chain: D-alanine--D-alanine ligase (308 aa).

The ATP-grasp domain occupies 104–301 (KQIWQGSDLP…FDELCVAILD (198 aa)). 130–185 (IAELGLPVIIKPVHEGSSVGMSKVEKAEDFAAAIEKATQHDAVVMAEKWITGREFT) is a binding site for ATP. Residues Asp255, Glu268, and Asn270 each coordinate Mg(2+).

It belongs to the D-alanine--D-alanine ligase family. It depends on Mg(2+) as a cofactor. The cofactor is Mn(2+).

Its subcellular location is the cytoplasm. It carries out the reaction 2 D-alanine + ATP = D-alanyl-D-alanine + ADP + phosphate + H(+). It participates in cell wall biogenesis; peptidoglycan biosynthesis. Functionally, cell wall formation. The polypeptide is D-alanine--D-alanine ligase (Acinetobacter baumannii (strain AB307-0294)).